The chain runs to 232 residues: 5'-methylthioadenosine/S-adenosylhomocysteine nucleosidase (232 aa).

The active-site Proton acceptor is E12. Substrate is bound by residues G78, I152, and 173-174 (ME). The Proton donor role is filled by D197.

This sequence belongs to the PNP/UDP phosphorylase family. MtnN subfamily. As to quaternary structure, homodimer.

It catalyses the reaction S-adenosyl-L-homocysteine + H2O = S-(5-deoxy-D-ribos-5-yl)-L-homocysteine + adenine. It carries out the reaction S-methyl-5'-thioadenosine + H2O = 5-(methylsulfanyl)-D-ribose + adenine. The catalysed reaction is 5'-deoxyadenosine + H2O = 5-deoxy-D-ribose + adenine. It functions in the pathway amino-acid biosynthesis; L-methionine biosynthesis via salvage pathway; S-methyl-5-thio-alpha-D-ribose 1-phosphate from S-methyl-5'-thioadenosine (hydrolase route): step 1/2. Functionally, catalyzes the irreversible cleavage of the glycosidic bond in both 5'-methylthioadenosine (MTA) and S-adenosylhomocysteine (SAH/AdoHcy) to adenine and the corresponding thioribose, 5'-methylthioribose and S-ribosylhomocysteine, respectively. Also cleaves 5'-deoxyadenosine, a toxic by-product of radical S-adenosylmethionine (SAM) enzymes, into 5-deoxyribose and adenine. Thus, is required for in vivo function of the radical SAM enzymes biotin synthase and lipoic acid synthase, that are inhibited by 5'-deoxyadenosine accumulation. This Edwardsiella ictaluri (strain 93-146) protein is 5'-methylthioadenosine/S-adenosylhomocysteine nucleosidase.